Here is a 75-residue protein sequence, read N- to C-terminus: Small ribosomal subunit protein bS18 (75 aa).

It belongs to the bacterial ribosomal protein bS18 family. Part of the 30S ribosomal subunit. Forms a tight heterodimer with protein bS6.

In terms of biological role, binds as a heterodimer with protein bS6 to the central domain of the 16S rRNA, where it helps stabilize the platform of the 30S subunit. This chain is Small ribosomal subunit protein bS18, found in Thermotoga maritima (strain ATCC 43589 / DSM 3109 / JCM 10099 / NBRC 100826 / MSB8).